Reading from the N-terminus, the 293-residue chain is Glutamyl-Q tRNA(Asp) synthetase (293 aa).

L-glutamate-binding positions include 4 to 8 (RYAPS) and E40. The 'HIGH' region signature appears at 7 to 17 (PSPSGDLHFGN). Residues C92, C94, Y113, and C117 each coordinate Zn(2+). L-glutamate contacts are provided by Y180 and R198. The short motif at 236 to 240 (RLAKR) is the 'KMSKS' region element. K239 contacts ATP.

It belongs to the class-I aminoacyl-tRNA synthetase family. GluQ subfamily. The cofactor is Zn(2+).

Its function is as follows. Catalyzes the tRNA-independent activation of glutamate in presence of ATP and the subsequent transfer of glutamate onto a tRNA(Asp). Glutamate is transferred on the 2-amino-5-(4,5-dihydroxy-2-cyclopenten-1-yl) moiety of the queuosine in the wobble position of the QUC anticodon. The chain is Glutamyl-Q tRNA(Asp) synthetase from Corynebacterium glutamicum (strain ATCC 13032 / DSM 20300 / JCM 1318 / BCRC 11384 / CCUG 27702 / LMG 3730 / NBRC 12168 / NCIMB 10025 / NRRL B-2784 / 534).